A 270-amino-acid chain; its full sequence is Zinc finger protein ZAT2 (270 aa).

Polar residues-rich tracts occupy residues 1–28 (MSNT…YNQN) and 36–48 (LTNN…SSSP). The interval 1–64 (MSNTSNSDPN…QPDPDASQIA (64 aa)) is disordered. Residues 65–87 (RPCTECGKQFGSLKALFGHMRCH) form a C2H2-type 1 zinc finger. The interval 95-119 (INPPSNFKRRINSNAASSSSSWDPS) is disordered. A compositionally biased stretch (low complexity) spans 106-115 (NSNAASSSSS). C2H2-type zinc fingers lie at residues 148 to 170 (FECD…RATH) and 211 to 233 (HRCN…MRCH).

In terms of assembly, interacts (via the EAR motif) with TPL. In terms of tissue distribution, expressed exclusively in pollen.

The protein resides in the nucleus. In terms of biological role, mediates the regulation of male germ cell division by DUO1. In Arabidopsis thaliana (Mouse-ear cress), this protein is Zinc finger protein ZAT2.